The chain runs to 106 residues: MDLIESIRALAALAFTLGLIGLAAWALRKYGPDSIGRAIAARQDRRLKVIESLALDPTRRLVVVSLDGEERLVLLGDGRLLDWTPKGPPPASALSPSPVAEPEPVV.

The helical transmembrane segment at 9-27 (ALAALAFTLGLIGLAAWAL) threads the bilayer. The disordered stretch occupies residues 84 to 106 (TPKGPPPASALSPSPVAEPEPVV).

The protein belongs to the FliO/MopB family.

Its subcellular location is the cell membrane. It is found in the bacterial flagellum basal body. This is an uncharacterized protein from Caulobacter vibrioides (strain ATCC 19089 / CIP 103742 / CB 15) (Caulobacter crescentus).